Here is a 274-residue protein sequence, read N- to C-terminus: NAD-dependent protein deacetylase (274 aa).

In terms of domain architecture, Deacetylase sirtuin-type spans 1 to 274; that stretch reads MDSRMSDLQA…CDEVLAEVVS (274 aa). Residues 26–46 and 104–107 contribute to the NAD(+) site; these read GAGC…GQWK and QNVD. The active-site Proton acceptor is the His122. 4 residues coordinate Zn(2+): Cys130, Cys133, Cys181, and Cys184. NAD(+) is bound by residues 221 to 223, 247 to 249, and Cys265; these read GSS and NLG.

It belongs to the sirtuin family. Class II subfamily. Zn(2+) serves as cofactor.

The protein resides in the cytoplasm. It catalyses the reaction N(6)-acetyl-L-lysyl-[protein] + NAD(+) + H2O = 2''-O-acetyl-ADP-D-ribose + nicotinamide + L-lysyl-[protein]. In terms of biological role, NAD-dependent protein deacetylase which modulates the activities of several enzymes which are inactive in their acetylated form. In Bordetella bronchiseptica (strain ATCC BAA-588 / NCTC 13252 / RB50) (Alcaligenes bronchisepticus), this protein is NAD-dependent protein deacetylase.